A 138-amino-acid chain; its full sequence is Protein X (138 aa).

The segment at 20–43 is disordered; that stretch reads PLRGQPSGPSVSGTSAGSPSSAAS. The span at 25 to 43 shows a compositional bias: low complexity; sequence PSGPSVSGTSAGSPSSAAS. Positions 68–113 are mitochondrial targeting sequence; the sequence is PCCLGFTCADLRTMDSTVNFVPWHAKRQLGMMQKDFWTAYIRDQLL.

The protein belongs to the orthohepadnavirus protein X family. May form homodimer. May interact with host CEBPA, CFLAR, CREB1, DDB1, E4F1, HBXIP, HSPD1/HSP60, NFKBIA, POLR2E and SMAD4. Interacts with host SMC5-SMC6 complex and induces its degradation. Interacts with host TRPC4AP; leading to prevent ubiquitination of TRPC4AP. Interacts with host PLSCR1; this interaction promotes ubiquitination and degradation of HBx and impairs HBx-mediated cell proliferation. A fraction may be phosphorylated in insect cells and HepG2 cells, a human hepatoblastoma cell line. Phosphorylated in vitro by host protein kinase C or mitogen-activated protein kinase. N-acetylated in insect cells.

Its subcellular location is the host cytoplasm. The protein localises to the host nucleus. It localises to the host mitochondrion. Functionally, multifunctional protein that plays a role in silencing host antiviral defenses and promoting viral transcription. Does not seem to be essential for HBV infection. May be directly involved in development of cirrhosis and liver cancer (hepatocellular carcinoma). Most of cytosolic activities involve modulation of cytosolic calcium. The effect on apoptosis is controversial depending on the cell types in which the studies have been conducted. May induce apoptosis by localizing in mitochondria and causing loss of mitochondrial membrane potential. May also modulate apoptosis by binding host CFLAR, a key regulator of the death-inducing signaling complex (DISC). Promotes viral transcription by using the host E3 ubiquitin ligase DDB1 to target the SMC5-SMC6 complex to proteasomal degradation. This host complex would otherwise bind to viral episomal DNA, and prevents its transcription. Moderately stimulates transcription of many different viral and cellular transcription elements. Promoters and enhancers stimulated by HBx contain DNA binding sites for NF-kappa-B, AP-1, AP-2, c-EBP, ATF/CREB, or the calcium-activated factor NF-AT. This is Protein X from Ground squirrel hepatitis virus (strain 27) (GSHV).